The primary structure comprises 166 residues: Cytochrome c-type biogenesis protein CcmE (166 aa).

Over 1 to 13 (MNFLPKSRKARRR) the chain is Cytoplasmic. Residues 14–34 (LTILAVAAPVVALAVGLALWG) form a helical; Signal-anchor for type II membrane protein membrane-spanning segment. Residues 35 to 166 (MRDAISLFYT…QGYKPGKPNT (132 aa)) lie on the Periplasmic side of the membrane. 2 residues coordinate heme: histidine 128 and tyrosine 132. A disordered region spans residues 143-166 (EQGEWRGDGQAPSYQGYKPGKPNT).

The protein belongs to the CcmE/CycJ family.

The protein resides in the cell inner membrane. Heme chaperone required for the biogenesis of c-type cytochromes. Transiently binds heme delivered by CcmC and transfers the heme to apo-cytochromes in a process facilitated by CcmF and CcmH. In Caulobacter sp. (strain K31), this protein is Cytochrome c-type biogenesis protein CcmE.